We begin with the raw amino-acid sequence, 132 residues long: Small ribosomal subunit protein uS8 (132 aa).

Belongs to the universal ribosomal protein uS8 family. As to quaternary structure, part of the 30S ribosomal subunit. Contacts proteins S5 and S12.

Its function is as follows. One of the primary rRNA binding proteins, it binds directly to 16S rRNA central domain where it helps coordinate assembly of the platform of the 30S subunit. This chain is Small ribosomal subunit protein uS8, found in Gluconacetobacter diazotrophicus (strain ATCC 49037 / DSM 5601 / CCUG 37298 / CIP 103539 / LMG 7603 / PAl5).